The following is a 248-amino-acid chain: Ribosomal RNA small subunit methyltransferase J (248 aa).

Residues 98–99 (RD), 114–115 (ER), 150–151 (SS), and aspartate 168 contribute to the S-adenosyl-L-methionine site.

The protein belongs to the methyltransferase superfamily. RsmJ family.

It localises to the cytoplasm. It carries out the reaction guanosine(1516) in 16S rRNA + S-adenosyl-L-methionine = N(2)-methylguanosine(1516) in 16S rRNA + S-adenosyl-L-homocysteine + H(+). Its function is as follows. Specifically methylates the guanosine in position 1516 of 16S rRNA. The protein is Ribosomal RNA small subunit methyltransferase J of Shewanella denitrificans (strain OS217 / ATCC BAA-1090 / DSM 15013).